Here is a 195-residue protein sequence, read N- to C-terminus: Type II secretion system protein J (195 aa).

A propeptide spans 1 to 7 (leader sequence); it reads MINRQQG. Position 8 is an N-methylphenylalanine (Phe8). The helical transmembrane segment at 8–29 threads the bilayer; sequence FTLLEVMAALAIFSMLSVLAFM.

This sequence belongs to the GSP J family. In terms of assembly, type II secretion is composed of four main components: the outer membrane complex, the inner membrane complex, the cytoplasmic secretion ATPase and the periplasm-spanning pseudopilus. Interacts with core component GspG. Cleaved by prepilin peptidase. Post-translationally, methylated by prepilin peptidase at the amino group of the N-terminal phenylalanine once the leader sequence is cleaved by prepilin peptidase.

The protein localises to the cell inner membrane. Functionally, component of the type II secretion system required for the energy-dependent secretion of extracellular factors such as proteases and toxins from the periplasm. Part of the pseudopilus tip complex that is critical for the recognition and binding of secretion substrates. This is Type II secretion system protein J (gspJ) from Escherichia coli (strain K12).